The sequence spans 387 residues: UDP-N-acetylglucosamine--N-acetylmuramyl-(pentapeptide) pyrophosphoryl-undecaprenol N-acetylglucosamine transferase (387 aa).

UDP-N-acetyl-alpha-D-glucosamine-binding positions include 26–28 (TGG), N137, R177, S205, and Q306.

This sequence belongs to the glycosyltransferase 28 family. MurG subfamily.

The protein localises to the cell inner membrane. The enzyme catalyses di-trans,octa-cis-undecaprenyl diphospho-N-acetyl-alpha-D-muramoyl-L-alanyl-D-glutamyl-meso-2,6-diaminopimeloyl-D-alanyl-D-alanine + UDP-N-acetyl-alpha-D-glucosamine = di-trans,octa-cis-undecaprenyl diphospho-[N-acetyl-alpha-D-glucosaminyl-(1-&gt;4)]-N-acetyl-alpha-D-muramoyl-L-alanyl-D-glutamyl-meso-2,6-diaminopimeloyl-D-alanyl-D-alanine + UDP + H(+). It participates in cell wall biogenesis; peptidoglycan biosynthesis. Functionally, cell wall formation. Catalyzes the transfer of a GlcNAc subunit on undecaprenyl-pyrophosphoryl-MurNAc-pentapeptide (lipid intermediate I) to form undecaprenyl-pyrophosphoryl-MurNAc-(pentapeptide)GlcNAc (lipid intermediate II). The sequence is that of UDP-N-acetylglucosamine--N-acetylmuramyl-(pentapeptide) pyrophosphoryl-undecaprenol N-acetylglucosamine transferase from Rhodospirillum rubrum (strain ATCC 11170 / ATH 1.1.1 / DSM 467 / LMG 4362 / NCIMB 8255 / S1).